The sequence spans 205 residues: Large ribosomal subunit protein uL3 (205 aa).

Positions Gly-126–Gly-150 are disordered.

Belongs to the universal ribosomal protein uL3 family. As to quaternary structure, part of the 50S ribosomal subunit. Forms a cluster with proteins L14 and L19.

In terms of biological role, one of the primary rRNA binding proteins, it binds directly near the 3'-end of the 23S rRNA, where it nucleates assembly of the 50S subunit. The sequence is that of Large ribosomal subunit protein uL3 from Dehalococcoides mccartyi (strain ATCC BAA-2100 / JCM 16839 / KCTC 5957 / BAV1).